Here is a 353-residue protein sequence, read N- to C-terminus: S-adenosylmethionine:tRNA ribosyltransferase-isomerase (353 aa).

It belongs to the QueA family. In terms of assembly, monomer.

Its subcellular location is the cytoplasm. It catalyses the reaction 7-aminomethyl-7-carbaguanosine(34) in tRNA + S-adenosyl-L-methionine = epoxyqueuosine(34) in tRNA + adenine + L-methionine + 2 H(+). It functions in the pathway tRNA modification; tRNA-queuosine biosynthesis. Its function is as follows. Transfers and isomerizes the ribose moiety from AdoMet to the 7-aminomethyl group of 7-deazaguanine (preQ1-tRNA) to give epoxyqueuosine (oQ-tRNA). The chain is S-adenosylmethionine:tRNA ribosyltransferase-isomerase from Paraburkholderia phymatum (strain DSM 17167 / CIP 108236 / LMG 21445 / STM815) (Burkholderia phymatum).